A 40-amino-acid polypeptide reads, in one-letter code: Probable non-specific lipid-transfer protein (40 aa).

This sequence belongs to the plant LTP family. Phosphorylated by Ca(2+)-dependent protein kinase.

Plant non-specific lipid-transfer proteins transfer phospholipids as well as galactolipids across membranes. May play a role in wax or cutin deposition in the cell walls of expanding epidermal cells and certain secretory tissues. The sequence is that of Probable non-specific lipid-transfer protein from Triticum aestivum (Wheat).